A 222-amino-acid polypeptide reads, in one-letter code: Vacuolar protein sorting-associated protein 2 homolog 2 (222 aa).

Coiled-coil stretches lie at residues 26-83 and 143-222; these read RGIE…AQIR and SEAI…LRRI. The segment at 179 to 222 is disordered; the sequence is SSAPKGRIATKTAAPPASTAATNKNSESSEVDELEKRLASLRRI. Residues 187 to 203 are compositionally biased toward low complexity; sequence ATKTAAPPASTAATNKN.

It belongs to the SNF7 family. Component of the endosomal sorting required for transport complex III (ESCRT-III), composed at least of VPS2, VPS20, VPS24 and VPS32. Interacts with CHMP1A, CHMP1B and VPS60-1.

The protein localises to the endosome. Functionally, component of the ESCRT-III complex, which is required for multivesicular bodies (MVBs) formation and sorting of endosomal cargo proteins into MVBs. The ESCRT-III complex is probably involved in the concentration of MVB cargo. The chain is Vacuolar protein sorting-associated protein 2 homolog 2 (VPS2.2) from Arabidopsis thaliana (Mouse-ear cress).